The chain runs to 108 residues: MSQWKDICKIDDILPETGVCALLGDEQVAIFRPYHSDQVFAISNIDPFFESSVLSRGLIAEHQGELWVASPLKKQRFRLSDGLCMEDEQFSVKHYEARVKDGVVQLRG.

This sequence to B.subtilis NasE. Associates with NirB.

Its subcellular location is the cytoplasm. The catalysed reaction is NH4(+) + 3 NAD(+) + 2 H2O = nitrite + 3 NADH + 5 H(+). Its function is as follows. Required for activity of the reductase. The polypeptide is Nitrite reductase (NADH) small subunit (nirD) (Escherichia coli O157:H7).